The following is a 220-amino-acid chain: Large ribosomal subunit protein uL16z (220 aa).

Belongs to the universal ribosomal protein uL16 family. As to quaternary structure, component of the small ribosomal subunit. Mature ribosomes consist of a small (40S) and a large (60S) subunit. The 40S subunit contains about 33 different proteins and 1 molecule of RNA (18S). The 60S subunit contains about 49 different proteins and 3 molecules of RNA (25S, 5.8S and 5S). Interacts with NIK1. Interacts with LIMYB. Phosphorylated by NIK1 and NIK2 in vitro. Ubiquitous, with the highest expression in flowers. Expressed in seedlings, leaves, roots, stems and flowers. Expressed in young leaves, mostly in dividing cells and in the hydathodes, in the root tips and lateral root primordia, in pistils, anthers, and pollen grains, and in developing seeds.

The protein localises to the cytoplasm. The protein resides in the nucleus. In terms of biological role, ribosomal protein involved in translational regulation. Contribute to general translation under UV-B stress. Involved in the NIK1-mediated defense response to geminivirus infection. Acts coordinately with LIMYB as a transcriptional repressor. The sequence is that of Large ribosomal subunit protein uL16z from Arabidopsis thaliana (Mouse-ear cress).